The following is a 140-amino-acid chain: Large ribosomal subunit protein uL11 (140 aa).

Belongs to the universal ribosomal protein uL11 family. In terms of assembly, part of the ribosomal stalk of the 50S ribosomal subunit. Interacts with L10 and the large rRNA to form the base of the stalk. L10 forms an elongated spine to which L12 dimers bind in a sequential fashion forming a multimeric L10(L12)X complex. In terms of processing, one or more lysine residues are methylated.

Forms part of the ribosomal stalk which helps the ribosome interact with GTP-bound translation factors. The sequence is that of Large ribosomal subunit protein uL11 from Geobacter sp. (strain M21).